A 380-amino-acid polypeptide reads, in one-letter code: Queuine tRNA-ribosyltransferase (380 aa).

Asp96 serves as the catalytic Proton acceptor. Residues 96–100, Asp150, Gln193, and Gly220 each bind substrate; that span reads DSGGF. The RNA binding stretch occupies residues 251-257; sequence GVGAPDS. Asp270 functions as the Nucleophile in the catalytic mechanism. The interval 275 to 279 is RNA binding; important for wobble base 34 recognition; sequence TRIAR. Zn(2+) contacts are provided by Cys308, Cys310, Cys313, and His339.

This sequence belongs to the queuine tRNA-ribosyltransferase family. As to quaternary structure, homodimer. Within each dimer, one monomer is responsible for RNA recognition and catalysis, while the other monomer binds to the replacement base PreQ1. Requires Zn(2+) as cofactor.

The catalysed reaction is 7-aminomethyl-7-carbaguanine + guanosine(34) in tRNA = 7-aminomethyl-7-carbaguanosine(34) in tRNA + guanine. Its pathway is tRNA modification; tRNA-queuosine biosynthesis. Its function is as follows. Catalyzes the base-exchange of a guanine (G) residue with the queuine precursor 7-aminomethyl-7-deazaguanine (PreQ1) at position 34 (anticodon wobble position) in tRNAs with GU(N) anticodons (tRNA-Asp, -Asn, -His and -Tyr). Catalysis occurs through a double-displacement mechanism. The nucleophile active site attacks the C1' of nucleotide 34 to detach the guanine base from the RNA, forming a covalent enzyme-RNA intermediate. The proton acceptor active site deprotonates the incoming PreQ1, allowing a nucleophilic attack on the C1' of the ribose to form the product. After dissociation, two additional enzymatic reactions on the tRNA convert PreQ1 to queuine (Q), resulting in the hypermodified nucleoside queuosine (7-(((4,5-cis-dihydroxy-2-cyclopenten-1-yl)amino)methyl)-7-deazaguanosine). This chain is Queuine tRNA-ribosyltransferase, found in Streptococcus pneumoniae (strain ATCC BAA-255 / R6).